The sequence spans 912 residues: Alpha-actinin-4 (912 aa).

Residues 1–267 (MVDYHAANQA…IMTYVSSFYH (267 aa)) form an actin-binding region. The interval 12-27 (QYGPNSGGGNGAGGGG) is interaction with VCL. The disordered stretch occupies residues 12 to 31 (QYGPNSGGGNGAGGGGSMGD). A compositionally biased stretch (gly residues) spans 16–29 (NSGGGNGAGGGGSM). Phosphotyrosine is present on Tyr32. The interaction with VCL stretch occupies residues 41–62 (RDLLLDPAWEKQQRKTFTAWCN). Calponin-homology (CH) domains lie at 51–155 (KQQR…LRFA) and 164–270 (TSAK…HAFS). The LXXLL motif signature appears at 85–89 (LMLLL). Positions 109 to 127 (KINNVNKALDFIASKGVKL) are interaction with VCL. Position 115 is an N6-acetyllysine (Lys115). A polyphosphoinositide (PIP2)-binding region spans residues 178-193 (TAPYKNVNVQNFHISW). An N6-acetyllysine modification is found at Lys215. Residue Thr250 is modified to Phosphothreonine. Spectrin repeat units lie at residues 294 to 404 (HLME…WLLN), 414 to 519 (HLAE…ALEK), 529 to 640 (QLHL…ALLE), and 650 to 753 (HLRR…EVEN). Residues Lys593 and Lys626 each carry the N6-acetyllysine modification. At Ser697 the chain carries Phosphoserine. The mediates interaction with MICALL2 stretch occupies residues 737–912 (WEQLLTTIAR…STALYGESDL (176 aa)). EF-hand domains follow at residues 766 to 801 (EQMQ…LGYD) and 807 to 842 (QGDA…ETTD). Position 779 (Asp779) interacts with Ca(2+). An N6-acetyllysine modification is found at Lys780. Asp781 and Glu790 together coordinate Ca(2+). Lys860 is subject to N6-acetyllysine. At Ser910 the chain carries Phosphoserine.

This sequence belongs to the alpha-actinin family. Homodimer; antiparallel. Interacts with MAGI1. Interacts with PDLIM2. Identified in a complex with CASK, IQGAP1, MAGI2, NPHS1, SPTAN1 and SPTBN1. Identified in a IGF2BP1-dependent mRNP granule complex containing untranslated mRNAs. Component of the CART complex, at least composed of ACTN4, HGS/HRS, MYO5B and TRIM3. Binds TRIM3 at the N-terminus. Interacts with MICALL2 (preferentially in opened conformation); stimulated by RAB13 activation. Interacts with PPARG and RARA. Binds to VCL; this interaction triggers VCL conformational changes. Interacts with SEPTIN14. Interacts with IGSF8.

Its subcellular location is the nucleus. It is found in the cytoplasm. The protein localises to the cell junction. It localises to the cytoskeleton. The protein resides in the stress fiber. Its subcellular location is the perinuclear region. In terms of biological role, F-actin cross-linking protein which is thought to anchor actin to a variety of intracellular structures. This is a bundling protein. Probably involved in vesicular trafficking via its association with the CART complex. The CART complex is necessary for efficient transferrin receptor recycling but not for EGFR degradation. Involved in tight junction assembly in epithelial cells probably through interaction with MICALL2. Links MICALL2 to the actin cytoskeleton and recruits it to the tight junctions. May also function as a transcriptional coactivator, stimulating transcription mediated by the nuclear hormone receptors PPARG and RARA. Association with IGSF8 regulates the immune synapse formation and is required for efficient T-cell activation. This Mus musculus (Mouse) protein is Alpha-actinin-4.